Here is a 336-residue protein sequence, read N- to C-terminus: Holliday junction branch migration complex subunit RuvB (336 aa).

Residues 4-185 are large ATPase domain (RuvB-L); that stretch reads ADRLISADIQ…FGIVQRLEFY (182 aa). ATP-binding positions include isoleucine 24, arginine 25, glycine 66, lysine 69, threonine 70, threonine 71, 132-134, arginine 175, tyrosine 185, and arginine 222; that span reads EDY. Residue threonine 70 coordinates Mg(2+). A small ATPAse domain (RuvB-S) region spans residues 186–256; it reads NVDDLQHIVA…IASKALDMLN (71 aa). Positions 259 to 336 are head domain (RuvB-H); the sequence is AAGFDYLDRK…RHFNRIMEAP (78 aa). DNA-binding residues include arginine 295, arginine 314, and arginine 319.

The protein belongs to the RuvB family. Homohexamer. Forms an RuvA(8)-RuvB(12)-Holliday junction (HJ) complex. HJ DNA is sandwiched between 2 RuvA tetramers; dsDNA enters through RuvA and exits via RuvB. An RuvB hexamer assembles on each DNA strand where it exits the tetramer. Each RuvB hexamer is contacted by two RuvA subunits (via domain III) on 2 adjacent RuvB subunits; this complex drives branch migration. In the full resolvosome a probable DNA-RuvA(4)-RuvB(12)-RuvC(2) complex forms which resolves the HJ.

Its subcellular location is the cytoplasm. It carries out the reaction ATP + H2O = ADP + phosphate + H(+). Its function is as follows. The RuvA-RuvB-RuvC complex processes Holliday junction (HJ) DNA during genetic recombination and DNA repair, while the RuvA-RuvB complex plays an important role in the rescue of blocked DNA replication forks via replication fork reversal (RFR). RuvA specifically binds to HJ cruciform DNA, conferring on it an open structure. The RuvB hexamer acts as an ATP-dependent pump, pulling dsDNA into and through the RuvAB complex. RuvB forms 2 homohexamers on either side of HJ DNA bound by 1 or 2 RuvA tetramers; 4 subunits per hexamer contact DNA at a time. Coordinated motions by a converter formed by DNA-disengaged RuvB subunits stimulates ATP hydrolysis and nucleotide exchange. Immobilization of the converter enables RuvB to convert the ATP-contained energy into a lever motion, pulling 2 nucleotides of DNA out of the RuvA tetramer per ATP hydrolyzed, thus driving DNA branch migration. The RuvB motors rotate together with the DNA substrate, which together with the progressing nucleotide cycle form the mechanistic basis for DNA recombination by continuous HJ branch migration. Branch migration allows RuvC to scan DNA until it finds its consensus sequence, where it cleaves and resolves cruciform DNA. This is Holliday junction branch migration complex subunit RuvB from Proteus mirabilis (strain HI4320).